The sequence spans 288 residues: ATP synthase gamma chain (288 aa).

The protein belongs to the ATPase gamma chain family. F-type ATPases have 2 components, CF(1) - the catalytic core - and CF(0) - the membrane proton channel. CF(1) has five subunits: alpha(3), beta(3), gamma(1), delta(1), epsilon(1). CF(0) has three main subunits: a, b and c.

It localises to the cell membrane. Its function is as follows. Produces ATP from ADP in the presence of a proton gradient across the membrane. The gamma chain is believed to be important in regulating ATPase activity and the flow of protons through the CF(0) complex. In Staphylococcus haemolyticus (strain JCSC1435), this protein is ATP synthase gamma chain.